The primary structure comprises 178 residues: MHSSALLCCLVLLTGVRASPGQGTQSENSCTHFPGNLPNMLRDLRDAFSRVKTFFQMKDQLDNLLLKESLLEDFKGYLGCQALSEMIQFYLEEVMPQAENQDPDIKAHVNSLGENLKTLRLRLRRCHRFLPCENKSKAVEQVKNAFNKLQEKGIYKAMSEFDIFINYIEAYMTMKIRN.

Positions methionine 1–alanine 18 are cleaved as a signal peptide. 2 cysteine pairs are disulfide-bonded: cysteine 30-cysteine 126 and cysteine 80-cysteine 132. N-linked (GlcNAc...) asparagine glycosylation occurs at asparagine 134.

This sequence belongs to the IL-10 family. In terms of assembly, homodimer. Interacts with IL10RA and IL10RB. As to expression, produced by a variety of cell lines, including T-cells, macrophages, mast cells and other cell types.

Its subcellular location is the secreted. In terms of biological role, major immune regulatory cytokine that acts on many cells of the immune system where it has profound anti-inflammatory functions, limiting excessive tissue disruption caused by inflammation. Mechanistically, IL10 binds to its heterotetrameric receptor comprising IL10RA and IL10RB leading to JAK1 and STAT2-mediated phosphorylation of STAT3. In turn, STAT3 translocates to the nucleus where it drives expression of anti-inflammatory mediators. Targets antigen-presenting cells (APCs) such as macrophages and monocytes and inhibits their release of pro-inflammatory cytokines including granulocyte-macrophage colony-stimulating factor /GM-CSF, granulocyte colony-stimulating factor/G-CSF, IL-1 alpha, IL-1 beta, IL-6, IL-8 and TNF-alpha. Also interferes with antigen presentation by reducing the expression of MHC-class II and co-stimulatory molecules, thereby inhibiting their ability to induce T cell activation. In addition, controls the inflammatory response of macrophages by reprogramming essential metabolic pathways including mTOR signaling. This chain is Interleukin-10 (IL10), found in Homo sapiens (Human).